A 368-amino-acid polypeptide reads, in one-letter code: Phosphoserine aminotransferase (368 aa).

R42 provides a ligand contact to L-glutamate. Residues 76–77, W102, T152, D179, and Q202 each bind pyridoxal 5'-phosphate; that span reads AS. An N6-(pyridoxal phosphate)lysine modification is found at K203. 245–246 provides a ligand contact to pyridoxal 5'-phosphate; that stretch reads NT.

It belongs to the class-V pyridoxal-phosphate-dependent aminotransferase family. SerC subfamily. As to quaternary structure, homodimer. Pyridoxal 5'-phosphate is required as a cofactor.

Its subcellular location is the cytoplasm. The catalysed reaction is O-phospho-L-serine + 2-oxoglutarate = 3-phosphooxypyruvate + L-glutamate. The enzyme catalyses 4-(phosphooxy)-L-threonine + 2-oxoglutarate = (R)-3-hydroxy-2-oxo-4-phosphooxybutanoate + L-glutamate. Its pathway is amino-acid biosynthesis; L-serine biosynthesis; L-serine from 3-phospho-D-glycerate: step 2/3. It functions in the pathway cofactor biosynthesis; pyridoxine 5'-phosphate biosynthesis; pyridoxine 5'-phosphate from D-erythrose 4-phosphate: step 3/5. Catalyzes the reversible conversion of 3-phosphohydroxypyruvate to phosphoserine and of 3-hydroxy-2-oxo-4-phosphonooxybutanoate to phosphohydroxythreonine. This chain is Phosphoserine aminotransferase, found in Nitrosomonas europaea (strain ATCC 19718 / CIP 103999 / KCTC 2705 / NBRC 14298).